A 269-amino-acid chain; its full sequence is Pertussis toxin subunit 1 homolog (269 aa).

Positions 1 to 34 (MRCTRAIRQTARTGWLTWLAILAVTAPMTSPAWA) are cleaved as a signal peptide.

The protein belongs to the bacterial exotoxin subunit A family.

This is Pertussis toxin subunit 1 homolog (ptxA) from Bordetella parapertussis (strain 12822 / ATCC BAA-587 / NCTC 13253).